Reading from the N-terminus, the 271-residue chain is Ferric vulnibactin reductase VuuB (271 aa).

The FAD-binding FR-type domain maps to 8-131 (VYPMLLDFVR…IGPAGPDPLI (124 aa)).

Belongs to the SIP oxidoreductase family. Monomer. FAD is required as a cofactor.

The protein localises to the cytoplasm. The catalysed reaction is 2 a Fe(II)-siderophore + NAD(+) + H(+) = 2 a Fe(III)-siderophore + NADH. Its function is as follows. Ferric-siderophore reductase involved in iron removal from the siderophores after their transport into the cell. Acts as a major ferric-vulnibactin reductase catalyzing the reduction of Fe(3+)-vulnibactin, a catecholate siderophore synthesized by V.vulnificus. Catalyzes reduction of Fe(3+)-aerobactin, a citrate-hydroxamate siderophore produced by other bacteria, in the absence of IutB. Catalyzes reduction of Fe(3+)-vibriobactin in vitro. No activity with ferrioxamine B or Fe(3+)-enterobactin. Catalyzes reduction of ferric chelating compounds Fe(3+)-nitrilotriacetic acid (NTA), Fe(3+)-citrate and Fe(3+)-EDTA as well as non-complexed FeCl3 in the presence of NADH as its electron donor and FAD as its cofactor in vitro. Highest activity with Fe(3+)-NTA as electron acceptor. This chain is Ferric vulnibactin reductase VuuB, found in Vibrio vulnificus.